Here is an 892-residue protein sequence, read N- to C-terminus: Histone deacetylase 4 (892 aa).

Positions Asn145–Ser225 are disordered. Composition is skewed to polar residues over residues Ser171–Leu192 and Glu208–His222. The histone deacetylase stretch occupies residues Ser481–Asp822. The active site involves His628.

Belongs to the histone deacetylase family. HD type 2 subfamily.

The protein localises to the nucleus. It carries out the reaction N(6)-acetyl-L-lysyl-[histone] + H2O = L-lysyl-[histone] + acetate. Its function is as follows. Responsible for the deacetylation of lysine residues on the N-terminal part of the core histones (H2A, H2B, H3 and H4). Histone deacetylation gives a tag for epigenetic repression and plays an important role in transcriptional regulation, cell cycle progression and developmental events. Histone deacetylases act via the formation of large multiprotein complexes. In Caenorhabditis briggsae, this protein is Histone deacetylase 4 (hda-4).